Reading from the N-terminus, the 468-residue chain is 6-phosphogluconate dehydrogenase, decarboxylating (468 aa).

Residues 9–14, 32–34, 73–75, and Asn101 each bind NADP(+); these read GLAVMG, NRS, and VQA. Substrate contacts are provided by residues Asn101 and 127–129; that span reads SGG. The active-site Proton acceptor is the Lys182. 185-186 is a substrate binding site; it reads HN. Residue Glu189 is the Proton donor of the active site. Substrate is bound by residues Tyr190, Lys259, Arg286, Arg444, and His450.

It belongs to the 6-phosphogluconate dehydrogenase family. Homodimer.

The catalysed reaction is 6-phospho-D-gluconate + NADP(+) = D-ribulose 5-phosphate + CO2 + NADPH. The protein operates within carbohydrate degradation; pentose phosphate pathway; D-ribulose 5-phosphate from D-glucose 6-phosphate (oxidative stage): step 3/3. Catalyzes the oxidative decarboxylation of 6-phosphogluconate to ribulose 5-phosphate and CO(2), with concomitant reduction of NADP to NADPH. This Staphylococcus aureus (strain Mu50 / ATCC 700699) protein is 6-phosphogluconate dehydrogenase, decarboxylating (gnd).